The sequence spans 444 residues: N-succinylarginine dihydrolase (444 aa).

Substrate contacts are provided by residues Ala-19 to Ser-28, Asn-110, and His-137 to Arg-138. Residue Glu-174 is part of the active site. Arg-214 serves as a coordination point for substrate. Residue His-250 is part of the active site. The substrate site is built by Asp-252 and Asn-362. Catalysis depends on Cys-368, which acts as the Nucleophile.

The protein belongs to the succinylarginine dihydrolase family. Homodimer.

The catalysed reaction is N(2)-succinyl-L-arginine + 2 H2O + 2 H(+) = N(2)-succinyl-L-ornithine + 2 NH4(+) + CO2. Its pathway is amino-acid degradation; L-arginine degradation via AST pathway; L-glutamate and succinate from L-arginine: step 2/5. Catalyzes the hydrolysis of N(2)-succinylarginine into N(2)-succinylornithine, ammonia and CO(2). In Shewanella baltica (strain OS223), this protein is N-succinylarginine dihydrolase.